The sequence spans 89 residues: Large ribosomal subunit protein bL27 (89 aa).

A disordered region spans residues 1–24 (MAHKKAGGSSRNGRDSAGRRLGVK).

This sequence belongs to the bacterial ribosomal protein bL27 family.

This is Large ribosomal subunit protein bL27 from Maricaulis maris (strain MCS10) (Caulobacter maris).